A 238-amino-acid polypeptide reads, in one-letter code: Ribonuclease PH (238 aa).

Residues R86 and 124 to 126 (GTR) each bind phosphate.

The protein belongs to the RNase PH family. Homohexameric ring arranged as a trimer of dimers.

The catalysed reaction is tRNA(n+1) + phosphate = tRNA(n) + a ribonucleoside 5'-diphosphate. In terms of biological role, phosphorolytic 3'-5' exoribonuclease that plays an important role in tRNA 3'-end maturation. Removes nucleotide residues following the 3'-CCA terminus of tRNAs; can also add nucleotides to the ends of RNA molecules by using nucleoside diphosphates as substrates, but this may not be physiologically important. Probably plays a role in initiation of 16S rRNA degradation (leading to ribosome degradation) during starvation. The polypeptide is Ribonuclease PH (Shigella flexneri serotype 5b (strain 8401)).